Consider the following 99-residue polypeptide: MDHKAYMYVLECRDGSYYIGYTTDMRRRLAIHNSGKGAKYTRARLPVKLIYAQGFASKEEAMSAEALFKRKKRPQKEEFLSENQDRNLLSYFEESWGVL.

A GIY-YIG domain is found at 3 to 78 (HKAYMYVLEC…KRKKRPQKEE (76 aa)).

Belongs to the UPF0213 family.

This is UPF0213 protein spr1390 from Streptococcus pneumoniae (strain ATCC BAA-255 / R6).